The primary structure comprises 628 residues: tRNA uridine 5-carboxymethylaminomethyl modification enzyme MnmG (628 aa).

14-19 (GAGHAG) serves as a coordination point for FAD. Position 274-288 (274-288 (GPRYCPSIEDKIVRF)) interacts with NAD(+).

Belongs to the MnmG family. In terms of assembly, homodimer. Heterotetramer of two MnmE and two MnmG subunits. The cofactor is FAD.

It is found in the cytoplasm. In terms of biological role, NAD-binding protein involved in the addition of a carboxymethylaminomethyl (cmnm) group at the wobble position (U34) of certain tRNAs, forming tRNA-cmnm(5)s(2)U34. This chain is tRNA uridine 5-carboxymethylaminomethyl modification enzyme MnmG, found in Clostridium kluyveri (strain ATCC 8527 / DSM 555 / NBRC 12016 / NCIMB 10680 / K1).